A 506-amino-acid chain; its full sequence is Cytochrome P450 4B1 (506 aa).

Residue glutamate 310 participates in heme binding. Position 431 is a phosphoserine (serine 431). Cysteine 448 provides a ligand contact to heme.

Belongs to the cytochrome P450 family. The cofactor is heme.

The protein resides in the endoplasmic reticulum membrane. The protein localises to the microsome membrane. The enzyme catalyses an organic molecule + reduced [NADPH--hemoprotein reductase] + O2 = an alcohol + oxidized [NADPH--hemoprotein reductase] + H2O + H(+). In terms of biological role, cytochromes P450 are a group of heme-thiolate monooxygenases. In liver microsomes, this enzyme is involved in an NADPH-dependent electron transport pathway. It oxidizes a variety of structurally unrelated compounds, including steroids, fatty acids, and xenobiotics. In Oryctolagus cuniculus (Rabbit), this protein is Cytochrome P450 4B1 (CYP4B1).